The chain runs to 340 residues: MKRPYDALMPLPKAELHLHIEGTLEPELAFALAARNGVSLPYADEDALREAYRFADLQSFLNLYYELMAVLRTERDFEDLADAYLARAAAQGVRHAEIFFDPQAHLARGVEMGTVVEGLWRALGASRENHGVSTRLILCFLRDESAESAMRTLDAAGPYLDRITGVGLDSAEVGHPPVKFREVYEAAAALGLRRVAHAGEEGPPAYVVEALDVLGVERIDHGLRSVEDPALVERLVRERVPLTLCPLSNVRLRTVDTLADHPLPAMLDAGLMCTVNSDDPAYFGGYAGDNFDAVRQALGLTGERLRELARNSFLASFLEDDEELRARYLAEVEAYRFPAA.

Positions 17, 19, and 197 each coordinate Zn(2+). The active-site Proton donor is E200. Residue D278 participates in Zn(2+) binding. Residue D279 coordinates substrate.

The protein belongs to the metallo-dependent hydrolases superfamily. Adenosine and AMP deaminases family. Adenine deaminase type 2 subfamily. The cofactor is Zn(2+).

The catalysed reaction is adenine + H2O + H(+) = hypoxanthine + NH4(+). Functionally, catalyzes the hydrolytic deamination of adenine to hypoxanthine. Plays an important role in the purine salvage pathway and in nitrogen catabolism. The sequence is that of Adenine deaminase from Streptomyces coelicolor (strain ATCC BAA-471 / A3(2) / M145).